Consider the following 117-residue polypeptide: MNLIDQIENEQLRSDLPLFVSGDTIIVQVKVREGERERLQAFEGVVIAKKNRGIGSAFTVRKISHGEGVERVFQTHSKMIDSIKVKRRGKVHQAKLYYLRGLTGKKARIKEKLQIRK.

This sequence belongs to the bacterial ribosomal protein bL19 family.

Functionally, this protein is located at the 30S-50S ribosomal subunit interface and may play a role in the structure and function of the aminoacyl-tRNA binding site. The sequence is that of Large ribosomal subunit protein bL19 from Vesicomyosocius okutanii subsp. Calyptogena okutanii (strain HA).